The chain runs to 346 residues: Putative D-xylulose reductase (346 aa).

3 residues coordinate Zn(2+): cysteine 39, histidine 64, and glutamate 150.

Belongs to the zinc-containing alcohol dehydrogenase family. Zn(2+) serves as cofactor.

It carries out the reaction xylitol + NAD(+) = D-xylulose + NADH + H(+). The sequence is that of Putative D-xylulose reductase from Rhizobium meliloti (strain 1021) (Ensifer meliloti).